The chain runs to 746 residues: NAD(P)H-quinone oxidoreductase subunit 5, chloroplastic (746 aa).

A run of 16 helical transmembrane segments spans residues 9-29 (WIIPFIPLPVPILIGVGLLLF), 40-60 (WAFPSIFLLTIVMIFSIDLSI), 89-109 (IDSLTSIMSILITTVGILVLI), 121-140 (YLRFFTYMSFFNTSMLGLVT), 147-167 (VYIFWELVGMCSYLLIGFWFT), 185-205 (GDFGLLLGILGFYWITGSLEF), 219-239 (NEVNILFVTLCALLLFCGSVA), 258-278 (TPISALIHAATMVAAGIFLVA), 280-300 (LLPLFIVIPSIMSGIALIGII), 327-347 (LGYMMLALGMGSYRAALFHLI), 354-374 (ALLFLGSGSIIHSMEAIVGYS), 396-416 (MSFLIGTLSLCGIPPFACFWS), 425-445 (WLYSPIFAIIACSTAGLTAFY), 552-572 (LFSMLVLVLFTFFVGSIGISF), 606-626 (FFINATFSVSIAFFGLFIASF), and 726-746 (SYIFFFVLIFLLICYYIYLFP).

It belongs to the complex I subunit 5 family. NDH is composed of at least 16 different subunits, 5 of which are encoded in the nucleus.

It localises to the plastid. Its subcellular location is the chloroplast thylakoid membrane. The catalysed reaction is a plastoquinone + NADH + (n+1) H(+)(in) = a plastoquinol + NAD(+) + n H(+)(out). The enzyme catalyses a plastoquinone + NADPH + (n+1) H(+)(in) = a plastoquinol + NADP(+) + n H(+)(out). Its function is as follows. NDH shuttles electrons from NAD(P)H:plastoquinone, via FMN and iron-sulfur (Fe-S) centers, to quinones in the photosynthetic chain and possibly in a chloroplast respiratory chain. The immediate electron acceptor for the enzyme in this species is believed to be plastoquinone. Couples the redox reaction to proton translocation, and thus conserves the redox energy in a proton gradient. This chain is NAD(P)H-quinone oxidoreductase subunit 5, chloroplastic (ndhF), found in Vicia faba (Broad bean).